The following is a 342-amino-acid chain: 11-beta-hydroxysteroid dehydrogenase-like 6 (342 aa).

Residues 10–30 (FLFPLLTLYALLVFYPTYQRL) traverse the membrane as a helical; Signal-anchor for type II membrane protein segment. Residues 54–80 (GAAS…VDIR) and aspartate 105 contribute to the NADP(+) site. Position 184 (serine 184) interacts with substrate. Tyrosine 197 serves as the catalytic Proton acceptor. NADP(+)-binding positions include 197–201 (YCASK) and lysine 201.

It belongs to the short-chain dehydrogenases/reductases (SDR) family.

Its subcellular location is the membrane. The sequence is that of 11-beta-hydroxysteroid dehydrogenase-like 6 (HSD6) from Arabidopsis thaliana (Mouse-ear cress).